Reading from the N-terminus, the 1037-residue chain is Importin-8 (1037 aa).

Positions 22 to 102 (AENELNQSYK…RDNIVEGIIR (81 aa)) constitute an Importin N-terminal domain. Over residues 886-895 (DRSKAEKADM) the composition is skewed to basic and acidic residues. A disordered region spans residues 886 to 934 (DRSKAEKADMEENEEISSDEEETNVTAQAMQSNNGRGEDEEEEDDDWDE). Over residues 896 to 908 (EENEEISSDEEET) the composition is skewed to acidic residues. Phosphoserine occurs at positions 902 and 903. The span at 909 to 920 (NVTAQAMQSNNG) shows a compositional bias: polar residues. Residues 923-934 (EDEEEEDDDWDE) show a composition bias toward acidic residues.

The protein belongs to the importin beta family. Forms a heterodimer with KPNB1. Interacts with SRP19. Interacts with RPL23A. Binds directly to nuclear pore complexes. Interacts with LRPPRC; the interaction occurs when LRPPRC is in its RNA-free form and promotes import of LRPPRC to the nucleus to allow for EIF4E-mediated export of mRNAS from the nucleus to the cytoplasm.

It is found in the cytoplasm. The protein resides in the nucleus. Its function is as follows. Involved in nuclear protein import, either by acting as autonomous nuclear transport receptor or as an adapter-like protein in association with the importin-beta subunit KPNB1. Acting autonomously, may serve as receptor for nuclear localization signals (NLS) and promote translocation of import substrates through the nuclear pore complex (NPC) by an energy requiring, Ran-dependent mechanism. At the nucleoplasmic side of the NPC, Ran binds to importin, the importin/substrate complex dissociates and importin is re-exported from the nucleus to the cytoplasm where GTP hydrolysis releases Ran. The directionality of nuclear import is thought to be conferred by an asymmetric distribution of the GTP- and GDP-bound forms of Ran between the cytoplasm and nucleus. In vitro mediates the nuclear import of the signal recognition particle protein SRP19. May also be involved in cytoplasm-to-nucleus shuttling of a broad spectrum of other cargos, including Argonaute-microRNAs complexes, the JUN protein, RELA/NF-kappa-B p65 subunit, the translation initiation factor EIF4E and a set of receptor-activated mothers against decapentaplegic homolog (SMAD) transcription factors that play a critical role downstream of the large family of transforming growth factor beta and bone morphogenetic protein (BMP) cytokines. This Homo sapiens (Human) protein is Importin-8 (IPO8).